The chain runs to 491 residues: Probable cytosol aminopeptidase (491 aa).

2 residues coordinate Mn(2+): Lys-261 and Asp-266. Lys-273 is an active-site residue. The Mn(2+) site is built by Asp-285, Asp-344, and Glu-346. Arg-348 is an active-site residue.

The protein belongs to the peptidase M17 family. It depends on Mn(2+) as a cofactor.

Its subcellular location is the cytoplasm. The enzyme catalyses Release of an N-terminal amino acid, Xaa-|-Yaa-, in which Xaa is preferably Leu, but may be other amino acids including Pro although not Arg or Lys, and Yaa may be Pro. Amino acid amides and methyl esters are also readily hydrolyzed, but rates on arylamides are exceedingly low.. The catalysed reaction is Release of an N-terminal amino acid, preferentially leucine, but not glutamic or aspartic acids.. In terms of biological role, presumably involved in the processing and regular turnover of intracellular proteins. Catalyzes the removal of unsubstituted N-terminal amino acids from various peptides. In Picosynechococcus sp. (strain ATCC 27264 / PCC 7002 / PR-6) (Agmenellum quadruplicatum), this protein is Probable cytosol aminopeptidase.